Consider the following 539-residue polypeptide: Netrin-G1 (539 aa).

The N-terminal stretch at 1–28 (MYLSRFLSIHALWVTVSSVMQPYPLVWG) is a signal peptide. Disulfide bonds link Cys33–Cys50, Cys72–Cys92, and Cys80–Cys88. In terms of domain architecture, Laminin N-terminal spans 46 to 296 (DYMACQPEST…AISDIKVRGR (251 aa)). The tract at residues 80 to 91 (CAMGNPYMCNNE) is NGL discriminant loop I. Asn133 is a glycosylation site (N-linked (GlcNAc...) asparagine). An intrachain disulfide couples Cys182 to Cys206. The NGL discriminant loop II stretch occupies residues 208–214 (EEYSTGY). The tract at residues 273–275 (EIF) is NGL discriminant loop III. 15 disulfides stabilise this stretch: Cys297-Cys306, Cys299-Cys315, Cys317-Cys326, Cys329-Cys354, Cys364-Cys373, Cys366-Cys384, Cys387-Cys396, Cys399-Cys417, Cys420-Cys432, Cys422-Cys438, Cys440-Cys449, Cys452-Cys462, Cys467-Cys480, Cys474-Cys486, and Cys488-Cys497. Laminin EGF-like domains are found at residues 297-356 (CKCN…TCIP), 364-419 (CECF…VCIE), and 420-469 (CYCN…VCDN). Asn320 carries N-linked (GlcNAc...) asparagine glycosylation. The N-linked (GlcNAc...) asparagine glycan is linked to Asn406. An N-linked (GlcNAc...) asparagine glycan is attached at Asn433. Ser510 carries GPI-anchor amidated serine lipidation. Positions 511 to 539 (DSGQGAPPHGSPALLLLTTLLGTASPLVF) are cleaved as a propeptide — removed in mature form.

In terms of assembly, interacts with NGL1. N-glycosylated. Highly expressed in the thalamus, with very low expression, if any, in other tissues.

It localises to the cell membrane. Involved in controlling patterning and neuronal circuit formation at the laminar, cellular, subcellular and synaptic levels. Promotes neurite outgrowth of both axons and dendrites. This chain is Netrin-G1 (NTNG1), found in Homo sapiens (Human).